The sequence spans 143 residues: Large ribosomal subunit protein uL13 (143 aa).

It belongs to the universal ribosomal protein uL13 family. Part of the 50S ribosomal subunit.

In terms of biological role, this protein is one of the early assembly proteins of the 50S ribosomal subunit, although it is not seen to bind rRNA by itself. It is important during the early stages of 50S assembly. This Rubrobacter xylanophilus (strain DSM 9941 / JCM 11954 / NBRC 16129 / PRD-1) protein is Large ribosomal subunit protein uL13.